A 317-amino-acid polypeptide reads, in one-letter code: tRNA-cytidine(32) 2-sulfurtransferase (317 aa).

Positions 46 to 51 (SGGKDS) match the PP-loop motif motif. Cys-121, Cys-124, and Cys-212 together coordinate [4Fe-4S] cluster.

This sequence belongs to the TtcA family. Homodimer. It depends on Mg(2+) as a cofactor. [4Fe-4S] cluster serves as cofactor.

The protein localises to the cytoplasm. The enzyme catalyses cytidine(32) in tRNA + S-sulfanyl-L-cysteinyl-[cysteine desulfurase] + AH2 + ATP = 2-thiocytidine(32) in tRNA + L-cysteinyl-[cysteine desulfurase] + A + AMP + diphosphate + H(+). Its pathway is tRNA modification. Catalyzes the ATP-dependent 2-thiolation of cytidine in position 32 of tRNA, to form 2-thiocytidine (s(2)C32). The sulfur atoms are provided by the cysteine/cysteine desulfurase (IscS) system. This Shewanella loihica (strain ATCC BAA-1088 / PV-4) protein is tRNA-cytidine(32) 2-sulfurtransferase.